We begin with the raw amino-acid sequence, 57 residues long: Potassium channel toxin gamma-KTx 2.1 (57 aa).

The signal sequence occupies residues 1–21 (MKISFVLLLTLFICSIGWSEA). 3 disulfide bridges follow: C28–C49, C34–C54, and C38–C56.

The protein belongs to the short scorpion toxin superfamily. Potassium channel inhibitor family. Gamma-KTx 2 subfamily. As to expression, expressed by the venom gland.

The protein resides in the secreted. Functionally, blocks human and/or rat Kv11.1/KCNH2/ERG1, Kv11.2/KCNH6/ERG2 and Kv11.3/KCNH7/ERG3 by binding to channel outer vestibule (S5P domain) with a 1:1 stoichiometry. Inhibition data are the following: hERG1 (reversible, Kd=7.7 nM, IC(50)=3.3 nM, IC(50)=11.9 nM), rERG1 (reversible, Kd=19 nM), hERG2 (reversible, Kd=77 nM), rERG2 (irreversible, Kd=4.2 nM), hERG3 (reversible, Kd=11.5 nM) and rERG3 (reversible, Kd=747 nM) potassium channels. Also has a minimal effect on rat ELK1/KCNH4 potassium channels (9% inhibition at 100 nM). Both this toxin and CnErgTx1 (AC Q86QT3) share mechanism of action and have overlapping binding sites on ERG1. The potency of these two toxins is not affected by elevating potassium ion concentration from 2 to 98 mM. In addition, at high toxin concentrations, block of ERG1 macroscopic currents by these two toxins is incomplete (88%). The blockade by this toxin is preferentially closed channel state-dependent, with a component of open, but not inactive state-dependent blockade. This toxin produces a concentration-dependent prolongation of QTc in the isolated rabbit heart (16.3% at 100 nM). The protein is Potassium channel toxin gamma-KTx 2.1 of Mesobuthus eupeus (Lesser Asian scorpion).